The primary structure comprises 331 residues: Phenylalanine--tRNA ligase alpha subunit (331 aa).

Residue glutamate 256 coordinates Mg(2+).

The protein belongs to the class-II aminoacyl-tRNA synthetase family. Phe-tRNA synthetase alpha subunit type 1 subfamily. In terms of assembly, tetramer of two alpha and two beta subunits. Mg(2+) serves as cofactor.

The protein localises to the cytoplasm. The enzyme catalyses tRNA(Phe) + L-phenylalanine + ATP = L-phenylalanyl-tRNA(Phe) + AMP + diphosphate + H(+). In Colwellia psychrerythraea (strain 34H / ATCC BAA-681) (Vibrio psychroerythus), this protein is Phenylalanine--tRNA ligase alpha subunit.